Reading from the N-terminus, the 334-residue chain is N-acetyl-gamma-glutamyl-phosphate reductase (334 aa).

Cys-154 is a catalytic residue.

The protein belongs to the NAGSA dehydrogenase family. Type 1 subfamily.

Its subcellular location is the cytoplasm. The enzyme catalyses N-acetyl-L-glutamate 5-semialdehyde + phosphate + NADP(+) = N-acetyl-L-glutamyl 5-phosphate + NADPH + H(+). It participates in amino-acid biosynthesis; L-arginine biosynthesis; N(2)-acetyl-L-ornithine from L-glutamate: step 3/4. Catalyzes the NADPH-dependent reduction of N-acetyl-5-glutamyl phosphate to yield N-acetyl-L-glutamate 5-semialdehyde. The chain is N-acetyl-gamma-glutamyl-phosphate reductase from Salmonella typhimurium (strain LT2 / SGSC1412 / ATCC 700720).